A 238-amino-acid chain; its full sequence is 1-(5-phosphoribosyl)-5-[(5-phosphoribosylamino)methylideneamino] imidazole-4-carboxamide isomerase (238 aa).

Asp-7 functions as the Proton acceptor in the catalytic mechanism. The Proton donor role is filled by Asp-129.

This sequence belongs to the HisA/HisF family.

The protein resides in the cytoplasm. The enzyme catalyses 1-(5-phospho-beta-D-ribosyl)-5-[(5-phospho-beta-D-ribosylamino)methylideneamino]imidazole-4-carboxamide = 5-[(5-phospho-1-deoxy-D-ribulos-1-ylimino)methylamino]-1-(5-phospho-beta-D-ribosyl)imidazole-4-carboxamide. Its pathway is amino-acid biosynthesis; L-histidine biosynthesis; L-histidine from 5-phospho-alpha-D-ribose 1-diphosphate: step 4/9. In Leuconostoc mesenteroides subsp. mesenteroides (strain ATCC 8293 / DSM 20343 / BCRC 11652 / CCM 1803 / JCM 6124 / NCDO 523 / NBRC 100496 / NCIMB 8023 / NCTC 12954 / NRRL B-1118 / 37Y), this protein is 1-(5-phosphoribosyl)-5-[(5-phosphoribosylamino)methylideneamino] imidazole-4-carboxamide isomerase.